The chain runs to 203 residues: Secreted phosphoprotein 24 (203 aa).

An N-terminal signal peptide occupies residues 1–23 (MEKMVMKMLVIFVFGMNHWTCTG). Cystine bridges form between Cys86/Cys97 and Cys110/Cys128. Ser90 carries the post-translational modification Phosphoserine. A phosphoserine mark is found at Ser138, Ser139, Ser166, and Ser175. Positions 155 to 174 (NSHLLGLTPDRSRGEPLYER) are disordered. The segment covering 164-174 (DRSRGEPLYER) has biased composition (basic and acidic residues).

Belongs to the SPP2 family. Post-translationally, multiply phosphorylated at serine residues. Phosphorylation sites are present in the extracellular medium.

The protein localises to the secreted. In terms of biological role, could coordinate an aspect of bone turnover. The chain is Secreted phosphoprotein 24 (SPP2) from Ovis aries (Sheep).